A 4473-amino-acid chain; its full sequence is Plectin (4473 aa).

2 Calponin-homology (CH) domains span residues 1 to 74 and 87 to 192; these read DGHN…LHFQ and MTAK…DAMP. Residues 1–192 form an actin-binding region; the sequence is DGHNLISLLE…YVSSLYDAMP (192 aa). A globular 1 region spans residues 1-1259; it reads DGHNLISLLE…SELTTLTSQY (1259 aa). A Spectrin 1 repeat occupies 449-508; that stretch reads RYLQDLLAWVEENQRRIDSAEWGVDLPSVEAQLGSHRGMHQSIEEFRAKIERARNDESQL. Position 509 is a phosphoserine (S509). Spectrin repeat units follow at residues 529 to 613 and 626 to 719; these read KLLN…REDH and LQTQ…AIVQ. A Phosphothreonine modification is found at T604. Residues 730–787 enclose the SH3 domain; that stretch reads RGHVPLMAVCDYKQVEVTVHKGDQCQLVGPAQPSHWKVLRGPSSEAAVPSVCFLVPPP. S836 is subject to Phosphoserine. A Spectrin 4 repeat occupies 1104–1204; it reads RERVNQLLER…QKFAKQYINA (101 aa). A Phosphoserine modification is found at S1224. Residues 1258–2548 are a coiled coil; sequence QYIKFISETL…EEIAATQAAA (1291 aa). A central fibrous rod domain region spans residues 1260–2544; sequence IKFISETLRR…LAHSEEIAAT (1285 aa). Disordered stretches follow at residues 1274-1293 and 1407-1434; these read ERLAEQQRAEERERLAEGEA and RAEEAEAQKRQAQEEAERLRRQVQDESQ. Residue S1510 is modified to Phosphoserine. N6-acetyllysine is present on K1514. Disordered stretches follow at residues 1529-1550, 1582-1616, 1881-1929, 1950-1971, and 2003-2098; these read VTQLREKAERRAQQQAEAERAR, SLAQADAEKQKEEAEREARRRGKAEEQAVRQRELA, AEDT…AARQ, LRERAEQESARQLQLAQEAAQK, and ERLR…KHKK. Basic and acidic residues-rich tracts occupy residues 1587 to 1616, 1881 to 1897, and 1905 to 1917; these read DAEKQKEEAEREARRRGKAEEQAVRQRELA, AEDTMRSKEQAEQEAAR, and EEQRRREAEERVQ. Positions 1959–1968 are enriched in low complexity; the sequence is ARQLQLAQEA. Residues 2003–2047 are compositionally biased toward basic and acidic residues; the sequence is ERLRGEAEAARRAAEEAEEAREQAEREAAQSRKQVEEAERLKQSA. The span at 2048–2061 shows a compositional bias: low complexity; that stretch reads EEQAQARAQAQAAA. Basic and acidic residues predominate over residues 2062–2077; it reads EKLRKEAEQEAARRAQ. Position 2420 is a phosphoserine (S2420). Residue K2425 is modified to N6-acetyllysine. The interval 2457 to 2476 is disordered; it reads REEQQRQQRQMEQEKQELVA. Residues 2545-4473 are globular 2; that stretch reads QAAAAKALPN…SLGGPESAVA (1929 aa). A phosphoserine mark is found at S2563 and S2591. Plectin repeat units lie at residues 2615–2652, 2653–2690, 2691–2728, 2729–2766, and 2770–2804; these read RQYLQGRSSIAGLLLKPTDEKLSVYTALQRQLLSPGTA, LILLEAQAASGFLLDPVRNRRLTVNEPVKEGVVGPELH, HKLLSAERAVTGYKDPYTGEQISLFQAMKKDLLVRDHA, IRLLEAQIATGGIIDTVHSHRVPVDVAYQRGYFDEEMS, and ADPGDDTKGFFDPNTHENLTYLQLLERCVEDPETG. Residue T2675 is modified to Phosphothreonine. Y2822 is modified (phosphotyrosine). N6-acetyllysine is present on residues K2842 and K2880. 5 Plectin repeats span residues 2905–2942, 2943–2980, 2981–3018, 3019–3056, and 3057–3094; these read ALVPAAELLESGVISHELYQQLQRGERSVREVAEADSV, RRALRGASVIAGVWLEEAGQKLSIYEALKKDLLQPDVA, VALLEAQAGTGHIIDPATSARLTVDEAVRAGLVGPELH, EKLLSAEKAVTGYRDPYSGQSVSLFQALKKGLIPREQG, and LRLLDAQLSTGGMVDPSKSHRVPLDVAYARGYLDKETN. Phosphotyrosine is present on Y3151. Residue K3209 is modified to N6-acetyllysine. Plectin repeat units lie at residues 3274–3311, 3312–3349, 3350–3387, 3388–3425, and 3429–3463; these read RTLLQGSGCLAGVYLEDSKEKVTIYEAMRRGLLRPSTA, TLLLEAQAATGFLVDPVRNQRLYVHEAVKAGVVGPELH, EKLLSAEKAVTGYKDPYSGTTISLFQAMKKGLVLREHA, IRLLEAQIATGGIIDPVHSHRLPVDVAYQRGYFDEEMS, and ADPSDDTKGFFDPNTHENLTYLQLLERCVEDPETG. At T3574 the chain carries Phosphothreonine. Residue Y3579 is modified to Phosphotyrosine. Plectin repeat units follow at residues 3609 to 3646, 3647 to 3684, 3685 to 3722, 3723 to 3760, 3764 to 3797, and 3800 to 3834; these read WRYLYGTGSVAGVYLPGSRQTLTIYQALKKGLLSAEVA, RLLLEAQAATGFLLDPVKGERLTVDEAVRKGLVGPELH, DRLLSAERAVTGYRDPYTEQTISLFQAMKKELIPAEEA, LRLLDAQLATGGIVDPRLGFHLPLEVAYQRGYLNKDTH, SEPSEVRSYVDPSTDERLSYTQLLKRCRRDDGSG, and LLPLSDARRLTFRGLRKQITVEELVRSQVMDEATA. T3819 carries the phosphothreonine modification. Position 3843 is a phosphoserine (S3843). Plectin repeat units lie at residues 3852–3889, 3890–3927, 3928–3965, 3966–4003, 4007–4041, and 4043–4094; these read QKFLEGTSCIAGVFVDATKERLSVYQAMKKGIIRPGTA, FELLEAQAATGYVIDPIKGLKLTVEEAVRMGIVGPEFK, DRLLSAERAVTGYKDPYSGKLISLFQAMKKGLILKDHG, IRLLEAQIATGGIIDPEESHRLPVEVAYKRGLFDEEMN, TDPSDDTKGFFDPNTEENLTYLQLMERCITDPQTG, and RLLP…HQTY. A binding to intermediate filaments region spans residues 4039 to 4089; that stretch reads QTGLRLLPLKEKKRERKTSSKSSVRKRRVVIVDPETSKEMSVYEAYRKGLI. Phosphoserine is present on residues S4171, S4173, S4174, S4175, S4178, S4179, S4180, and S4181. Y4182 carries the post-translational modification Phosphotyrosine. Phosphoserine occurs at positions 4185, 4189, and 4195. Plectin repeat units lie at residues 4197-4234, 4235-4272, 4273-4310, 4311-4348, and 4349-4386; these read SDPTEETGPVAGILDTETLEKVSITEAMHRNLVDNITG, QRLLEAQACTGGIIDPSTGERFPVTEAVNKGLVDKIMV, DRINLAQKAFCGFEDPRTKTKMSAAQALKKGWLYYEAG, QRFLEVQYLTGGLIEPDTPGRVPLDEALQRGTVDARTA, and QKLRDVSAYSKYLTCPKTKLKISYKDALDRSMVEEGTG. T4200 carries the post-translational modification Phosphothreonine. Residue T4328 is modified to Phosphothreonine; by CDK1. A phosphoserine mark is found at S4396 and S4402. Low complexity predominate over residues 4400–4460; it reads YYSPYSVSGS…SGYGRRYASG (61 aa). The tract at residues 4400-4473 is disordered; the sequence is YYSPYSVSGS…SLGGPESAVA (74 aa). Y4404 is subject to Phosphotyrosine. S4405, S4407, and S4411 each carry phosphoserine. T4412 is subject to Phosphothreonine. Positions 4414 to 4429 are 4 X 4 AA tandem repeats of G-S-R-X; sequence GSRTGSRTGSRAGSRR. S4415 carries the phosphoserine modification. Omega-N-methylarginine is present on residues R4416 and R4429. 2 positions are modified to phosphoserine: S4431 and S4464.

It belongs to the plakin or cytolinker family. As to quaternary structure, homodimer or homotetramer. Interacts (via actin-binding domain) with SYNE3. Interacts (via calponin-homology (CH) 1 domain) with VIM (via rod region). Interacts (via N-terminus) with DST isoform 2 (via N-terminus). Interacts with FER. Interacts with TOR1A. Interacts with ANK3. Identified in complexes that contain VIM, EZR, AHNAK, BFSP1, BFSP2, ANK2, PLEC, PRX and spectrin. Phosphorylated by CDK1; regulates dissociation from intermediate filaments during mitosis.

Its subcellular location is the cytoplasm. The protein localises to the cytoskeleton. It is found in the cell junction. The protein resides in the hemidesmosome. It localises to the cell projection. Its subcellular location is the podosome. In terms of biological role, interlinks intermediate filaments with microtubules and microfilaments and anchors intermediate filaments to desmosomes or hemidesmosomes. May be involved not only in the cross-linking and stabilization of cytoskeletal intermediate filaments network, but also in the regulation of their dynamics. This chain is Plectin (PLEC), found in Cricetulus griseus (Chinese hamster).